The primary structure comprises 269 residues: Dermonecrotic toxin SpeSicTox-betaIB3 (269 aa).

Residue His-5 is part of the active site. Positions 25 and 27 each coordinate Mg(2+). His-41 (nucleophile) is an active-site residue. Intrachain disulfides connect Cys-45–Cys-51 and Cys-47–Cys-191. A Mg(2+)-binding site is contributed by Asp-85.

The protein belongs to the arthropod phospholipase D family. Class II subfamily. It depends on Mg(2+) as a cofactor. Expressed by the venom gland.

Its subcellular location is the secreted. The enzyme catalyses an N-(acyl)-sphingosylphosphocholine = an N-(acyl)-sphingosyl-1,3-cyclic phosphate + choline. The catalysed reaction is an N-(acyl)-sphingosylphosphoethanolamine = an N-(acyl)-sphingosyl-1,3-cyclic phosphate + ethanolamine. It catalyses the reaction a 1-acyl-sn-glycero-3-phosphocholine = a 1-acyl-sn-glycero-2,3-cyclic phosphate + choline. It carries out the reaction a 1-acyl-sn-glycero-3-phosphoethanolamine = a 1-acyl-sn-glycero-2,3-cyclic phosphate + ethanolamine. Functionally, dermonecrotic toxins cleave the phosphodiester linkage between the phosphate and headgroup of certain phospholipids (sphingolipid and lysolipid substrates), forming an alcohol (often choline) and a cyclic phosphate. This toxin acts on sphingomyelin (SM). It may also act on ceramide phosphoethanolamine (CPE), lysophosphatidylcholine (LPC) and lysophosphatidylethanolamine (LPE), but not on lysophosphatidylserine (LPS), and lysophosphatidylglycerol (LPG). It acts by transphosphatidylation, releasing exclusively cyclic phosphate products as second products. Induces dermonecrosis, hemolysis, increased vascular permeability, edema, inflammatory response, and platelet aggregation. The polypeptide is Dermonecrotic toxin SpeSicTox-betaIB3 (Sicarius peruensis (Six-eyed sand spider)).